The sequence spans 95 residues: Small ribosomal subunit protein bS18 (95 aa).

This sequence belongs to the bacterial ribosomal protein bS18 family. Part of the 30S ribosomal subunit. Forms a tight heterodimer with protein bS6.

Its function is as follows. Binds as a heterodimer with protein bS6 to the central domain of the 16S rRNA, where it helps stabilize the platform of the 30S subunit. The polypeptide is Small ribosomal subunit protein bS18 (Rickettsia africae (strain ESF-5)).